We begin with the raw amino-acid sequence, 350 residues long: Nuclear pore complex-interacting protein family member A3 (350 aa).

Residues 306–325 form a disordered region; it reads KTPPECLLTPLPPSAPPSVD.

The protein belongs to the NPIP family.

This chain is Nuclear pore complex-interacting protein family member A3 (NPIPA3), found in Homo sapiens (Human).